The chain runs to 218 residues: Large ribosomal subunit protein mL54 (218 aa).

The protein belongs to the mitochondrion-specific ribosomal protein mL54 family. In terms of assembly, component of the mitochondrial large ribosomal subunit (mt-LSU). Mature N.crassa 74S mitochondrial ribosomes consist of a small (37S) and a large (54S) subunit. The 37S small subunit contains a 16S ribosomal RNA (16S mt-rRNA) and 32 different proteins. The 54S large subunit contains a 23S rRNA (23S mt-rRNA) and 42 different proteins.

The protein localises to the mitochondrion. Its function is as follows. Component of the mitochondrial ribosome (mitoribosome), a dedicated translation machinery responsible for the synthesis of mitochondrial genome-encoded proteins, including at least some of the essential transmembrane subunits of the mitochondrial respiratory chain. The mitoribosomes are attached to the mitochondrial inner membrane and translation products are cotranslationally integrated into the membrane. The sequence is that of Large ribosomal subunit protein mL54 (mrpl37) from Neurospora crassa (strain ATCC 24698 / 74-OR23-1A / CBS 708.71 / DSM 1257 / FGSC 987).